Here is a 513-residue protein sequence, read N- to C-terminus: ATP synthase subunit alpha (513 aa).

169-176 contributes to the ATP binding site; it reads GDRQTGKT.

It belongs to the ATPase alpha/beta chains family. F-type ATPases have 2 components, CF(1) - the catalytic core - and CF(0) - the membrane proton channel. CF(1) has five subunits: alpha(3), beta(3), gamma(1), delta(1), epsilon(1). CF(0) has three main subunits: a(1), b(2) and c(9-12). The alpha and beta chains form an alternating ring which encloses part of the gamma chain. CF(1) is attached to CF(0) by a central stalk formed by the gamma and epsilon chains, while a peripheral stalk is formed by the delta and b chains.

The protein resides in the cell inner membrane. The catalysed reaction is ATP + H2O + 4 H(+)(in) = ADP + phosphate + 5 H(+)(out). Its function is as follows. Produces ATP from ADP in the presence of a proton gradient across the membrane. The alpha chain is a regulatory subunit. The sequence is that of ATP synthase subunit alpha from Idiomarina loihiensis (strain ATCC BAA-735 / DSM 15497 / L2-TR).